Here is a 213-residue protein sequence, read N- to C-terminus: Imidazole glycerol phosphate synthase subunit HisH 2 (213 aa).

The Glutamine amidotransferase type-1 domain occupies 4-211 (RLGLIDYGMG…LNWLETGAKP (208 aa)). The active-site Nucleophile is Cys82. Active-site residues include His186 and Glu188.

As to quaternary structure, heterodimer of HisH and HisF.

Its subcellular location is the cytoplasm. The catalysed reaction is 5-[(5-phospho-1-deoxy-D-ribulos-1-ylimino)methylamino]-1-(5-phospho-beta-D-ribosyl)imidazole-4-carboxamide + L-glutamine = D-erythro-1-(imidazol-4-yl)glycerol 3-phosphate + 5-amino-1-(5-phospho-beta-D-ribosyl)imidazole-4-carboxamide + L-glutamate + H(+). It catalyses the reaction L-glutamine + H2O = L-glutamate + NH4(+). The protein operates within amino-acid biosynthesis; L-histidine biosynthesis; L-histidine from 5-phospho-alpha-D-ribose 1-diphosphate: step 5/9. IGPS catalyzes the conversion of PRFAR and glutamine to IGP, AICAR and glutamate. The HisH subunit provides the glutamine amidotransferase activity that produces the ammonia necessary to HisF for the synthesis of IGP and AICAR. This Prochlorococcus marinus (strain MIT 9313) protein is Imidazole glycerol phosphate synthase subunit HisH 2 (hisH2).